A 509-amino-acid polypeptide reads, in one-letter code: ATP synthase subunit alpha (509 aa).

169–176 (GDRQTGKT) lines the ATP pocket.

This sequence belongs to the ATPase alpha/beta chains family. In terms of assembly, F-type ATPases have 2 components, CF(1) - the catalytic core - and CF(0) - the membrane proton channel. CF(1) has five subunits: alpha(3), beta(3), gamma(1), delta(1), epsilon(1). CF(0) has three main subunits: a(1), b(2) and c(9-12). The alpha and beta chains form an alternating ring which encloses part of the gamma chain. CF(1) is attached to CF(0) by a central stalk formed by the gamma and epsilon chains, while a peripheral stalk is formed by the delta and b chains.

Its subcellular location is the cell inner membrane. It catalyses the reaction ATP + H2O + 4 H(+)(in) = ADP + phosphate + 5 H(+)(out). Its function is as follows. Produces ATP from ADP in the presence of a proton gradient across the membrane. The alpha chain is a regulatory subunit. In Methylorubrum populi (strain ATCC BAA-705 / NCIMB 13946 / BJ001) (Methylobacterium populi), this protein is ATP synthase subunit alpha.